The primary structure comprises 445 residues: Phosphatidate cytidylyltransferase 2 (445 aa).

The span at 1-39 shows a compositional bias: basic and acidic residues; it reads MTELRQRVAREPEAPPEDKESESEAKADGETASDSESRV. The segment at 1 to 52 is disordered; that stretch reads MTELRQRVAREPEAPPEDKESESEAKADGETASDSESRVEAVTQPPSADDTP. Position 21 is a phosphoserine (Ser21). At Thr31 the chain carries Phosphothreonine. Phosphoserine is present on residues Ser33, Ser35, and Ser37. A Phosphothreonine modification is found at Thr51. Transmembrane regions (helical) follow at residues 79 to 99, 132 to 152, 166 to 186, 213 to 233, 262 to 282, and 340 to 360; these read MIAF…MIVM, FLLC…FFTL, HRFI…LSLV, LVIH…SCVI, GFIG…YVMS, and IALS…ASGF.

The protein belongs to the CDS family. Homodimer.

It is found in the endoplasmic reticulum membrane. The catalysed reaction is a 1,2-diacyl-sn-glycero-3-phosphate + CTP + H(+) = a CDP-1,2-diacyl-sn-glycerol + diphosphate. The enzyme catalyses 1-octadecanoyl-2-(5Z,8Z,11Z,14Z-eicosatetraenoyl)-sn-glycero-3-phosphate + CTP + H(+) = 1-octadecanoyl-2-(5Z,8Z,11Z,14Z-eicosatetraenoyl)-sn-glycero-3-cytidine-5'-diphosphate + diphosphate. It carries out the reaction 1-octadecanoyl-2-(9Z,12Z-octadecadienoyl)-sn-glycero-3-phosphate + CTP + H(+) = 1-octadecanoyl-2-(9Z,12Z-octadecadienoyl)-sn-glycero-3-cytidine-5'-diphosphate + diphosphate. It catalyses the reaction 1-hexadecanoyl-2-(5Z,8Z,11Z,14Z-eicosatetraenoyl)-sn-glycero-3-phosphate + CTP + H(+) = 1-hexadecanoyl-2-(5Z,8Z,11Z,14Z-eicosatetraenoyl)-sn-glycero-3-cytidine-5'-diphosphate + diphosphate. The catalysed reaction is 1,2-di-(5Z,8Z,11Z,14Z)-eicosatetraenoyl-sn-glycero-3-phosphate + CTP + H(+) = 1,2-di-(5Z,8Z,11Z,14Z-eicosatetraenoyl)-sn-glycero-3-cytidine-5'-diphosphate + diphosphate. The enzyme catalyses 1-octadecanoyl-2-(9Z-octadecenoyl)-sn-glycero-3-phosphate + CTP + H(+) = 1-octadecanoyl-2-(9Z-octadecenoyl)-sn-glycero-3-cytidine-5'-diphosphate + diphosphate. It carries out the reaction 1-octadecanoyl-2-(4Z,7Z,10Z,13Z,16Z,19Z-docosahexaenoyl)-sn-glycero-3-phosphate + CTP + H(+) = 1-octadecanoyl-2-(4Z,7Z,10Z,13Z,16Z,19Z-docosahexaenoyl)-sn-glycero-3-cytidine-5'-diphosphate + diphosphate. It catalyses the reaction 1,2-di-(9Z,12Z-octadecadienoyl)-sn-glycero-3-phosphate + CTP + H(+) = 1,2-di-(9Z,12Z-octadecadienoyl)-sn-glycero-3-cytidine-5'-diphosphate + diphosphate. The catalysed reaction is 1,2-di-(9Z-octadecenoyl)-sn-glycero-3-phosphate + CTP + H(+) = 1,2-di-(9Z-octadecenoyl)-sn-glycero-3-cytidine-5'-diphosphate + diphosphate. It participates in phospholipid metabolism; CDP-diacylglycerol biosynthesis; CDP-diacylglycerol from sn-glycerol 3-phosphate: step 3/3. In terms of biological role, catalyzes the conversion of phosphatidic acid (PA) to CDP-diacylglycerol (CDP-DAG), an essential intermediate in the synthesis of phosphatidylglycerol, cardiolipin and phosphatidylinositol. Exhibits specificity for the nature of the acyl chains at the sn-1 and sn-2 positions in the substrate, PA and the preferred acyl chain composition is 1-stearoyl-2-arachidonoyl-sn-phosphatidic acid. Plays an important role in regulating the growth and maturation of lipid droplets which are storage organelles at the center of lipid and energy homeostasis. This is Phosphatidate cytidylyltransferase 2 (CDS2) from Bos taurus (Bovine).